Reading from the N-terminus, the 170-residue chain is MQIITAEDYRLYGGLKRPELESGVEVMITAANALITSLLGMDDADAVDQLITTKPTRKKYFLSSPSATSVTKMTINDKEIDPEQYKLYSDGVILLKFNPPEGYMDVEYTQGGFNPMPEDLKLAACMLVDHWHKQDYRQARTIGGETVTFNNTKSGIPEHIRTIIEVYRRV.

The protein localises to the virion. Head completion protein that closes the capsid once the viral DNA has been packaged. Probably part of the head-tail connector by binding to the portal protein and to the tail completion protein. This is Head completion protein from Escherichia coli (Enterobacteria phage T5).